The primary structure comprises 285 residues: Acetylglutamate kinase (285 aa).

Substrate-binding positions include glycine 64 to glycine 65, arginine 86, and asparagine 181.

The protein belongs to the acetylglutamate kinase family. ArgB subfamily.

The protein resides in the cytoplasm. The catalysed reaction is N-acetyl-L-glutamate + ATP = N-acetyl-L-glutamyl 5-phosphate + ADP. The protein operates within amino-acid biosynthesis; L-arginine biosynthesis; N(2)-acetyl-L-ornithine from L-glutamate: step 2/4. Functionally, catalyzes the ATP-dependent phosphorylation of N-acetyl-L-glutamate. This is Acetylglutamate kinase from Clostridium beijerinckii (strain ATCC 51743 / NCIMB 8052) (Clostridium acetobutylicum).